Here is an 804-residue protein sequence, read N- to C-terminus: Leucine--tRNA ligase (804 aa).

A 'HIGH' region motif is present at residues 40–51; it reads PYPSGQGLHVGH. The short motif at 576-580 is the 'KMSKS' region element; sequence KMSKS. Lys579 provides a ligand contact to ATP.

It belongs to the class-I aminoacyl-tRNA synthetase family.

The protein resides in the cytoplasm. It catalyses the reaction tRNA(Leu) + L-leucine + ATP = L-leucyl-tRNA(Leu) + AMP + diphosphate. This is Leucine--tRNA ligase from Enterococcus faecalis (strain ATCC 700802 / V583).